The chain runs to 655 residues: Hepatocyte growth factor activator serine protease (655 aa).

The first 35 residues, 1–35 (MGRWAWVPSPWPPPGLGPFLLLLLLLLLLPRGFQP), serve as a signal peptide directing secretion. A propeptide spans 36-372 (QPGGNRTESP…RLEACESLTR (337 aa)) (removed in mature form). Residues N40 and N48 are each glycosylated (N-linked (GlcNAc...) asparagine). The tract at residues 64–102 (TSETPATSAPEAEGPQSGGLPPPPRAVPSSSSPQAQALT) is disordered. The region spanning 103–150 (EDGRPCRFPFRYGGRMLHACTSEGSAHRKWCATTHNYDRDRAWGYCVE) is the Fibronectin type-II domain. Intrachain disulfides connect C108–C133, C122–C148, C164–C175, C169–C186, C188–C197, C202–C230, C228–C237, C245–C256, C250–C267, C269–C278, C286–C367, C307–C349, C338–C362, C394–C521, C432–C448, C440–C510, C535–C604, C567–C583, and C594–C622. The region spanning 160–198 (ALDPCASGPCLNGGSCSNTQDPQSYHCSCPRAFTGKDCG) is the EGF-like 1 domain. Residues 200 to 240 (EKCFDETRYEYLEGGDRWARVRQGHVEQCECFGGRTWCEGT) form the Fibronectin type-I domain. Residues 241-279 (RHTACLSSPCLNGGTCHLIVATGTTVCACPPGFAGRLCN) form the EGF-like 2 domain. The Kringle domain maps to 286 to 367 (CFLGNGTGYR…SWEYCRLEAC (82 aa)). An N-linked (GlcNAc...) asparagine glycan is attached at N290. Residues 408–646 (IIGGSSSLPG…YVDWINDRIR (239 aa)) enclose the Peptidase S1 domain. Residue H447 is the Charge relay system of the active site. N468 and N492 each carry an N-linked (GlcNAc...) asparagine glycan. Catalysis depends on D497, which acts as the Charge relay system. An N-linked (GlcNAc...) asparagine glycan is attached at N546. The active-site Charge relay system is the S598.

Belongs to the peptidase S1 family. In terms of assembly, heterodimer of a short chain and a long chain linked by a disulfide bond. The active form of HGFAC presents in the serum is derived from the COOH-terminal region of the precursor by the cleavage of bonds between Arg-372 and Val-373 and Arg-407 and Ile-408. Liver.

The protein localises to the secreted. In terms of biological role, serine protease that hydrolyzes the inactive zymogen hepatocyte growth factor (HGFsc) to an activated disulfide-linked heterodimer, then initiating hepatocyte growth factor receptor signaling pathway. This Homo sapiens (Human) protein is Hepatocyte growth factor activator serine protease.